The primary structure comprises 311 residues: tRNA N6-adenosine threonylcarbamoyltransferase (311 aa).

Fe cation is bound by residues histidine 108 and histidine 112. Substrate-binding positions include 130-134 (LVSGG), aspartate 163, glycine 176, aspartate 180, and asparagine 270. Aspartate 294 is a Fe cation binding site.

The protein belongs to the KAE1 / TsaD family. It depends on Fe(2+) as a cofactor.

It localises to the cytoplasm. The catalysed reaction is L-threonylcarbamoyladenylate + adenosine(37) in tRNA = N(6)-L-threonylcarbamoyladenosine(37) in tRNA + AMP + H(+). Required for the formation of a threonylcarbamoyl group on adenosine at position 37 (t(6)A37) in tRNAs that read codons beginning with adenine. Is involved in the transfer of the threonylcarbamoyl moiety of threonylcarbamoyl-AMP (TC-AMP) to the N6 group of A37, together with TsaE and TsaB. TsaD likely plays a direct catalytic role in this reaction. The polypeptide is tRNA N6-adenosine threonylcarbamoyltransferase (Metamycoplasma arthritidis (strain 158L3-1) (Mycoplasma arthritidis)).